The primary structure comprises 942 residues: Protein FAM184B (942 aa).

2 disordered regions span residues 1-26 and 73-97; these read MASA…RGGS and QEDL…TSED. 3 coiled-coil regions span residues 89 to 150, 196 to 337, and 387 to 495; these read QEQS…RVLI, EMHQ…DRLM, and SETQ…SLLE. The interval 486–542 is disordered; the sequence is STKLQNSLLEDPCSRPKKPARDEGLEKLTDEEESSSDEEERTGESVKGKSDLQPPFE. The span at 504–513 shows a compositional bias: basic and acidic residues; it reads PARDEGLEKL. Residues 514 to 526 show a composition bias toward acidic residues; sequence TDEEESSSDEEER. 2 coiled-coil regions span residues 575-619 and 686-815; these read NKDS…ESLR and EKGL…ERRF. A disordered region spans residues 880-934; sequence APPITKSPSLDPSPSCSQPYKPTQLLDGKTASRTQDGEPAQPKEAPQKQGSPHQE. A compositionally biased stretch (polar residues) spans 885–900; the sequence is KSPSLDPSPSCSQPYK.

It belongs to the FAM184 family.

This is Protein FAM184B (Fam184b) from Mus musculus (Mouse).